The primary structure comprises 760 residues: ATP-dependent zinc metalloprotease FtsH (760 aa).

At 1–5 the chain is on the cytoplasmic side; it reads MNRKN. The helical transmembrane segment at 6-26 threads the bilayer; that stretch reads VTRTITAIAVVVLLGWSFFYF. The Extracellular portion of the chain corresponds to 27 to 110; it reads SDDTRGYKPV…KVSTVVNQGS (84 aa). Residues 111–131 form a helical membrane-spanning segment; that stretch reads ILGELLVYVLPLLLLVGLFVM. Residues 132–760 lie on the Cytoplasmic side of the membrane; the sequence is FSRMQGGARM…EVSRTKPAHG (629 aa). 203–210 is a binding site for ATP; sequence GPPGTGKT. Residue His425 participates in Zn(2+) binding. Residue Glu426 is part of the active site. Zn(2+) contacts are provided by His429 and Asp501. The tract at residues 616–760 is disordered; that stretch reads DFGGRIPSDK…EVSRTKPAHG (145 aa). Positions 650-669 are enriched in low complexity; sequence AFKAAIAQATQAAEAARSDA. A compositionally biased stretch (acidic residues) spans 740–750; that stretch reads GSDESSAEQDD.

It in the central section; belongs to the AAA ATPase family. The protein in the C-terminal section; belongs to the peptidase M41 family. As to quaternary structure, homohexamer. Zn(2+) serves as cofactor.

It is found in the cell membrane. In terms of biological role, acts as a processive, ATP-dependent zinc metallopeptidase for both cytoplasmic and membrane proteins. Plays a role in the quality control of integral membrane proteins. In Mycobacterium bovis (strain ATCC BAA-935 / AF2122/97), this protein is ATP-dependent zinc metalloprotease FtsH.